The primary structure comprises 234 residues: Sugar fermentation stimulation protein A (234 aa).

Residues 201–220 (LLSEAQQRGVEILAYKAEIS) constitute a DNA-binding region (H-T-H motif).

It belongs to the SfsA family.

Functionally, binds to DNA non-specifically. Could be a regulatory factor involved in maltose metabolism. In Shigella flexneri, this protein is Sugar fermentation stimulation protein A.